Reading from the N-terminus, the 309-residue chain is Ribosomal RNA small subunit methyltransferase H (309 aa).

S-adenosyl-L-methionine-binding positions include 33–35 (GGH), Asp53, Phe79, Asp100, and Gln107.

Belongs to the methyltransferase superfamily. RsmH family.

It localises to the cytoplasm. The catalysed reaction is cytidine(1402) in 16S rRNA + S-adenosyl-L-methionine = N(4)-methylcytidine(1402) in 16S rRNA + S-adenosyl-L-homocysteine + H(+). Functionally, specifically methylates the N4 position of cytidine in position 1402 (C1402) of 16S rRNA. This Clostridium kluyveri (strain NBRC 12016) protein is Ribosomal RNA small subunit methyltransferase H.